Here is a 300-residue protein sequence, read N- to C-terminus: MTQEGKLEQQFLDYLHSERNYSVNTSTAYENDLLDFRRFLNEQAIETYQQVTFLDVRIYLTELKQKSFSRTTVARKISSLRSFYTFLLRENVIAENPFTYVSHAKNQLRLPKFFYSEEMEALFQVVYEDNETLTLRDRVLLEVLYGTGIRVSECAGILLPDLDTSYQAILIRGKGNKERYVPFGVYAEDAITDYLPKRTELMTRYKKSHDALLVNHYGDPLTTRGIRYCLTKIISKASLTRKIHPHMLRHTFATDLLNNGADMRTVQELLGHASLASTQIYTHVTKEHLKSTYMKHHPRA.

Residues 2–88 form the Core-binding (CB) domain; it reads TQEGKLEQQF…SLRSFYTFLL (87 aa). One can recognise a Tyr recombinase domain in the interval 109–294; the sequence is RLPKFFYSEE…TKEHLKSTYM (186 aa). Active-site residues include Arg150, Lys174, His246, Arg249, and His272. Catalysis depends on Tyr281, which acts as the O-(3'-phospho-DNA)-tyrosine intermediate.

This sequence belongs to the 'phage' integrase family. XerC subfamily. As to quaternary structure, forms a cyclic heterotetrameric complex composed of two molecules of XerC and two molecules of XerD.

It is found in the cytoplasm. Site-specific tyrosine recombinase, which acts by catalyzing the cutting and rejoining of the recombining DNA molecules. The XerC-XerD complex is essential to convert dimers of the bacterial chromosome into monomers to permit their segregation at cell division. It also contributes to the segregational stability of plasmids. The polypeptide is Tyrosine recombinase XerC (Listeria monocytogenes serotype 4a (strain HCC23)).